The chain runs to 571 residues: L-erythrulose 1-kinase (571 aa).

The 325-residue stretch at 7–331 (SPDDFADEAV…WTAPVETPAY (325 aa)) folds into the DhaK domain. The Tele-hemiaminal-histidine intermediate role is filled by H217. Residues 367 to 567 (RNIVAVLETF…FAMLMKALGE (201 aa)) form the DhaL domain. Residues 396–402 (DGDHGQG), 442–443 (TS), G484, R539, and 552–554 (DPG) contribute to the ATP site.

The enzyme catalyses L-erythrulose + ATP = L-erythrulose 1-phosphate + ADP + H(+). It participates in carbohydrate metabolism; L-threitol degradation. Functionally, kinase that has a preference for L-erythrulose, producing L-erythrulose-1P. Involved in the degradation pathway of L-threitol, that allows M.smegmatis to grow on this compound as the sole carbon source. Is also able to phosphorylate D-erythrulose and dihydroxyacetone in vitro. The protein is L-erythrulose 1-kinase of Mycolicibacterium smegmatis (strain ATCC 700084 / mc(2)155) (Mycobacterium smegmatis).